We begin with the raw amino-acid sequence, 243 residues long: Small ribosomal subunit protein uS3 (243 aa).

Residues 39–110 (IRTFIEKKYG…QVRINVVEVE (72 aa)) form the KH type-2 domain. The tract at residues 216–243 (QTIPVGANPKRKASRRPQQFEDRSNENS) is disordered. Over residues 233–243 (QQFEDRSNENS) the composition is skewed to basic and acidic residues.

It belongs to the universal ribosomal protein uS3 family. Part of the 30S ribosomal subunit. Forms a tight complex with proteins S10 and S14.

Binds the lower part of the 30S subunit head. Binds mRNA in the 70S ribosome, positioning it for translation. This is Small ribosomal subunit protein uS3 from Prochlorococcus marinus (strain MIT 9215).